The following is a 433-amino-acid chain: Signal recognition particle 54 kDa protein (433 aa).

Residues 106 to 113 (GVEGSGKT), 186 to 190 (DTAGR), and 244 to 247 (TKMD) contribute to the GTP site.

Belongs to the GTP-binding SRP family. SRP54 subfamily. Part of the signal recognition particle protein translocation system, which is composed of SRP and FtsY. Archaeal SRP consists of a 7S RNA molecule of 300 nucleotides and two protein subunits: SRP54 and SRP19.

The protein localises to the cytoplasm. The enzyme catalyses GTP + H2O = GDP + phosphate + H(+). Involved in targeting and insertion of nascent membrane proteins into the cytoplasmic membrane. Binds to the hydrophobic signal sequence of the ribosome-nascent chain (RNC) as it emerges from the ribosomes. The SRP-RNC complex is then targeted to the cytoplasmic membrane where it interacts with the SRP receptor FtsY. The polypeptide is Signal recognition particle 54 kDa protein (Pyrobaculum neutrophilum (strain DSM 2338 / JCM 9278 / NBRC 100436 / V24Sta) (Thermoproteus neutrophilus)).